Reading from the N-terminus, the 153-residue chain is Protein DpnD (153 aa).

This is Protein DpnD from Streptococcus pneumoniae serotype 4 (strain ATCC BAA-334 / TIGR4).